The sequence spans 268 residues: 4-hydroxy-tetrahydrodipicolinate reductase (268 aa).

8–13 (GAAGRM) is a binding site for NAD(+). Arginine 36 contributes to the NADP(+) binding site. Residues 99–101 (GTT) and 123–126 (AANF) each bind NAD(+). Histidine 156 acts as the Proton donor/acceptor in catalysis. Histidine 157 provides a ligand contact to (S)-2,3,4,5-tetrahydrodipicolinate. The active-site Proton donor is the lysine 160. Position 166–167 (166–167 (GT)) interacts with (S)-2,3,4,5-tetrahydrodipicolinate.

Belongs to the DapB family.

Its subcellular location is the cytoplasm. The catalysed reaction is (S)-2,3,4,5-tetrahydrodipicolinate + NAD(+) + H2O = (2S,4S)-4-hydroxy-2,3,4,5-tetrahydrodipicolinate + NADH + H(+). The enzyme catalyses (S)-2,3,4,5-tetrahydrodipicolinate + NADP(+) + H2O = (2S,4S)-4-hydroxy-2,3,4,5-tetrahydrodipicolinate + NADPH + H(+). Its pathway is amino-acid biosynthesis; L-lysine biosynthesis via DAP pathway; (S)-tetrahydrodipicolinate from L-aspartate: step 4/4. In terms of biological role, catalyzes the conversion of 4-hydroxy-tetrahydrodipicolinate (HTPA) to tetrahydrodipicolinate. This is 4-hydroxy-tetrahydrodipicolinate reductase from Pseudomonas fluorescens (strain ATCC BAA-477 / NRRL B-23932 / Pf-5).